The following is a 54-amino-acid chain: Small polypeptide DEVIL 12 (54 aa).

Residues 20–51 (NNKLTPNRSLKETRSRLYIIRRCLVMLLCWRE) are required for DVL/RTFL small polypeptide activity. Asn-26 carries an N-linked (GlcNAc...) asparagine glycan. A helical membrane pass occupies residues 31–48 (ETRSRLYIIRRCLVMLLC).

It belongs to the DVL/RTFL small polypeptides family.

It localises to the cell membrane. Small polypeptide acting as a regulatory molecule which coordinates cellular responses required for differentiation, growth and development, probably by restricting polar cell proliferation in lateral organs and coordinating socket cell recruitment and differentiation at trichome sites. The protein is Small polypeptide DEVIL 12 of Arabidopsis thaliana (Mouse-ear cress).